We begin with the raw amino-acid sequence, 965 residues long: Isoleucine--tRNA ligase (965 aa).

Residues 68–78 (PYANGSLHMGH) carry the 'HIGH' region motif. Residue Glu-582 coordinates L-isoleucyl-5'-AMP. The 'KMSKS' region signature appears at 623–627 (KMSKS). ATP is bound at residue Lys-626. The Zn(2+) site is built by Cys-936, Cys-939, Cys-956, and Cys-959.

It belongs to the class-I aminoacyl-tRNA synthetase family. IleS type 1 subfamily. Monomer. The cofactor is Zn(2+).

Its subcellular location is the cytoplasm. The enzyme catalyses tRNA(Ile) + L-isoleucine + ATP = L-isoleucyl-tRNA(Ile) + AMP + diphosphate. Functionally, catalyzes the attachment of isoleucine to tRNA(Ile). As IleRS can inadvertently accommodate and process structurally similar amino acids such as valine, to avoid such errors it has two additional distinct tRNA(Ile)-dependent editing activities. One activity is designated as 'pretransfer' editing and involves the hydrolysis of activated Val-AMP. The other activity is designated 'posttransfer' editing and involves deacylation of mischarged Val-tRNA(Ile). This chain is Isoleucine--tRNA ligase, found in Prochlorococcus marinus subsp. pastoris (strain CCMP1986 / NIES-2087 / MED4).